A 698-amino-acid polypeptide reads, in one-letter code: eEF1A lysine and N-terminal methyltransferase (698 aa).

Position 1 is an N-acetylmethionine (M1). A Phosphoserine modification is found at S267. Residues 431-461 (KDTSHRAQKKRKKDRKKQRPADTSEDFPPAP) form a disordered region. The segment covering 436–448 (RAQKKRKKDRKKQ) has biased composition (basic residues).

Belongs to the methyltransferase superfamily. As to quaternary structure, forms a tripartite complex containing GAB1, METTL13 and SPRY2. Within the complex interacts with GAB1 and SPRY2. In terms of tissue distribution, expressed in the inner ear (at protein level). Expression is detected in the cochlear duct, spiral limbus region, efferent and afferent nerves, and in spiral ganglion neurons (at protein level).

It localises to the cytoplasm. It is found in the nucleus. The protein localises to the mitochondrion. It carries out the reaction L-lysyl-[protein] + S-adenosyl-L-methionine = N(6)-methyl-L-lysyl-[protein] + S-adenosyl-L-homocysteine + H(+). The catalysed reaction is N(6)-methyl-L-lysyl-[protein] + S-adenosyl-L-methionine = N(6),N(6)-dimethyl-L-lysyl-[protein] + S-adenosyl-L-homocysteine + H(+). It catalyses the reaction N-terminal glycyl-L-lysyl-L-glutamyl-[protein] + 3 S-adenosyl-L-methionine = N-terminal N,N,N-trimethyl-glycyl-L-lysyl-L-glutamyl-[protein] + 3 S-adenosyl-L-homocysteine + 3 H(+). Dual methyltransferase that catalyzes methylation of elongation factor 1-alpha (EEF1A1 and EEF1A2) at two different positions, and is therefore involved in the regulation of mRNA translation. Via its C-terminus, methylates EEF1A1 and EEF1A2 at the N-terminal residue 'Gly-2'. Via its N-terminus dimethylates EEF1A1 and EEF1A2 at residue 'Lys-55'. Has no activity towards core histones H2A, H2B, H3 and H4. The chain is eEF1A lysine and N-terminal methyltransferase from Mus musculus (Mouse).